A 307-amino-acid chain; its full sequence is MTEHGLMSELDLLVSEGRNPRTMDIDLLPTIDVLRKINDEDRLVPVAVEKVLPEIAAAVDRIVLAFQKGARLIYVGAGTSGRLGVLDASECPPTFGVPEDMVIGLIAGGPDALVRSTEGAEDDPKMGAQALQEIGLTPDDVVMGIAVSGRTPYVIGGLNYAKQVGATTVALSCNPASTIAGIADIAISPVVGPEVLTGSTRLKSGTAQKLVLNMLTTASMIRIGKSFQNLMVDLNPSNKKLVARATRMVMQTTGCTAQQAKQALHQTSNDVKLAILVTITGLDVEAARAALGKAGGFLRKAISDPTA.

Residues 62–225 enclose the SIS domain; that stretch reads IVLAFQKGAR…TTASMIRIGK (164 aa). Catalysis depends on glutamate 90, which acts as the Proton donor. Residue glutamate 121 is part of the active site.

Belongs to the GCKR-like family. MurNAc-6-P etherase subfamily. As to quaternary structure, homodimer.

It carries out the reaction N-acetyl-D-muramate 6-phosphate + H2O = N-acetyl-D-glucosamine 6-phosphate + (R)-lactate. It functions in the pathway amino-sugar metabolism; 1,6-anhydro-N-acetylmuramate degradation. It participates in amino-sugar metabolism; N-acetylmuramate degradation. The protein operates within cell wall biogenesis; peptidoglycan recycling. In terms of biological role, specifically catalyzes the cleavage of the D-lactyl ether substituent of MurNAc 6-phosphate, producing GlcNAc 6-phosphate and D-lactate. Together with AnmK, is also required for the utilization of anhydro-N-acetylmuramic acid (anhMurNAc) either imported from the medium or derived from its own cell wall murein, and thus plays a role in cell wall recycling. The polypeptide is N-acetylmuramic acid 6-phosphate etherase (Mesorhizobium japonicum (strain LMG 29417 / CECT 9101 / MAFF 303099) (Mesorhizobium loti (strain MAFF 303099))).